A 491-amino-acid polypeptide reads, in one-letter code: Putative mannan endo-1,4-beta-mannosidase 5 (491 aa).

Residues 1–31 (METSYREEEARRKASLLHCIFFFLLGALAMA) form the signal peptide. The substrate site is built by Trp134 and Asn248. Glu249 functions as the Proton donor in the catalytic mechanism. Tyr330 lines the substrate pocket. Glu372 serves as the catalytic Nucleophile. Residue Asn385 is glycosylated (N-linked (GlcNAc...) asparagine). Trp416 is a binding site for substrate. N-linked (GlcNAc...) asparagine glycosylation occurs at Asn471.

Belongs to the glycosyl hydrolase 5 (cellulase A) family. Expression not detected.

The protein localises to the secreted. The enzyme catalyses Random hydrolysis of (1-&gt;4)-beta-D-mannosidic linkages in mannans, galactomannans and glucomannans.. The protein is Putative mannan endo-1,4-beta-mannosidase 5 (MAN5) of Oryza sativa subsp. japonica (Rice).